A 429-amino-acid chain; its full sequence is Tryptophan synthase beta chain 2 (429 aa).

The residue at position 111 (lysine 111) is an N6-(pyridoxal phosphate)lysine.

It belongs to the TrpB family. In terms of assembly, tetramer of two alpha and two beta chains. Pyridoxal 5'-phosphate is required as a cofactor.

The enzyme catalyses (1S,2R)-1-C-(indol-3-yl)glycerol 3-phosphate + L-serine = D-glyceraldehyde 3-phosphate + L-tryptophan + H2O. Its pathway is amino-acid biosynthesis; L-tryptophan biosynthesis; L-tryptophan from chorismate: step 5/5. In terms of biological role, the beta subunit is responsible for the synthesis of L-tryptophan from indole and L-serine. This is Tryptophan synthase beta chain 2 (trpB2) from Saccharolobus solfataricus (strain ATCC 35092 / DSM 1617 / JCM 11322 / P2) (Sulfolobus solfataricus).